Consider the following 386-residue polypeptide: Histidinol-phosphate aminotransferase (386 aa).

K240 is subject to N6-(pyridoxal phosphate)lysine.

Belongs to the class-II pyridoxal-phosphate-dependent aminotransferase family. Histidinol-phosphate aminotransferase subfamily. In terms of assembly, homodimer. The cofactor is pyridoxal 5'-phosphate.

It catalyses the reaction L-histidinol phosphate + 2-oxoglutarate = 3-(imidazol-4-yl)-2-oxopropyl phosphate + L-glutamate. Its pathway is amino-acid biosynthesis; L-histidine biosynthesis; L-histidine from 5-phospho-alpha-D-ribose 1-diphosphate: step 7/9. The chain is Histidinol-phosphate aminotransferase from Bifidobacterium longum (strain NCC 2705).